A 346-amino-acid chain; its full sequence is Putative F-box/kelch-repeat protein At1g27420 (346 aa).

Residues 9–56 (PIIPGLTDDVAELCVSKIPRSSFQITSQVCRRWRSFLRSQHFAAVRKL) form the F-box domain. Kelch repeat units follow at residues 62 to 109 (EFLC…VLDG), 111 to 167 (KIVF…EVNG), 168 to 215 (LLYV…AFSS), 217 to 257 (LYAV…VRNK), and 259 to 300 (YFMD…VWNN).

This chain is Putative F-box/kelch-repeat protein At1g27420, found in Arabidopsis thaliana (Mouse-ear cress).